Reading from the N-terminus, the 93-residue chain is Secretoglobin family 3A member 2 (93 aa).

Residues 1 to 21 (MKLVTIFLLVTISLCSYSATA) form the signal peptide.

It belongs to the secretoglobin family. UGRP subfamily. In terms of assembly, homodimer; disulfide-linked. Monomer. Interacts with APOA1. Highly expressed in lung and trachea. Detected throughout the airway epithelium in lung, with slightly higher expression in large airways. Found in lung submucosal gland acinus where it localizes to serous-like cells. Probably expressed in club cells of the bronchioles. Not detected in other tissues tested.

The protein localises to the secreted. Its function is as follows. Secreted cytokine-like protein. Binds to the scavenger receptor MARCO. Can also bind to pathogens including the Gram-positive bacterium L.monocytogenes, the Gram-negative bacterium P.aeruginosa, and yeast. Strongly inhibits phospholipase A2 (PLA2G1B) activity. Seems to have anti-inflammatory effects in respiratory epithelium. Also has anti-fibrotic activity in lung. May play a role in fetal lung development and maturation. Promotes branching morphogenesis during early stages of lung development. In the pituitary, may inhibit production of follicle-stimulating hormone (FSH) and luteinizing hormone (LH). The chain is Secretoglobin family 3A member 2 (SCGB3A2) from Homo sapiens (Human).